The following is a 473-amino-acid chain: B box and SPRY domain-containing protein (473 aa).

A disordered region spans residues 1-69 (MSADVSGTES…PKQGSERSQL (69 aa)). Over residues 35-51 (KPGPGPEPRPESGPEPG) the composition is skewed to pro residues. The segment at 65–113 (ERSQLCPEHFEPLSWFCLSERRPVCATCAGFGGRCHRHRIRRAEEHAEE) adopts a B box-type zinc-finger fold. Positions 259–455 (SPLLTQLWAA…ISIVRGPLAT (197 aa)) constitute a B30.2/SPRY domain.

As to quaternary structure, interacts with YWHAZ/14-3-3 protein zeta. Interacts with TRPV5 and TRPV6. According to PubMed:10978534, testis-specific. According to PubMed:16371431, broadly expressed.

Its subcellular location is the cytoplasm. It localises to the membrane. Functionally, may regulate epithelial calcium transport by inhibiting TRPV5 activity. The polypeptide is B box and SPRY domain-containing protein (Bspry) (Mus musculus (Mouse)).